The primary structure comprises 303 residues: Nucleotide-binding protein SAR0820 (303 aa).

Residue 18 to 25 (GLSGAGKS) coordinates ATP. 69 to 72 (DLRG) provides a ligand contact to GTP.

It belongs to the RapZ-like family.

Functionally, displays ATPase and GTPase activities. This chain is Nucleotide-binding protein SAR0820, found in Staphylococcus aureus (strain MRSA252).